Here is a 202-residue protein sequence, read N- to C-terminus: 3-isopropylmalate dehydratase small subunit 2 (202 aa).

It belongs to the LeuD family. LeuD type 1 subfamily. As to quaternary structure, heterodimer of LeuC and LeuD.

It carries out the reaction (2R,3S)-3-isopropylmalate = (2S)-2-isopropylmalate. It functions in the pathway amino-acid biosynthesis; L-leucine biosynthesis; L-leucine from 3-methyl-2-oxobutanoate: step 2/4. Its function is as follows. Catalyzes the isomerization between 2-isopropylmalate and 3-isopropylmalate, via the formation of 2-isopropylmaleate. In Bordetella parapertussis (strain 12822 / ATCC BAA-587 / NCTC 13253), this protein is 3-isopropylmalate dehydratase small subunit 2.